Consider the following 115-residue polypeptide: Peptidyl-tRNA hydrolase (115 aa).

This sequence belongs to the PTH2 family.

The protein resides in the cytoplasm. It catalyses the reaction an N-acyl-L-alpha-aminoacyl-tRNA + H2O = an N-acyl-L-amino acid + a tRNA + H(+). Its function is as follows. The natural substrate for this enzyme may be peptidyl-tRNAs which drop off the ribosome during protein synthesis. The chain is Peptidyl-tRNA hydrolase from Methanococcoides burtonii (strain DSM 6242 / NBRC 107633 / OCM 468 / ACE-M).